Consider the following 101-residue polypeptide: Small ribosomal subunit protein uS14 (101 aa).

Belongs to the universal ribosomal protein uS14 family. In terms of assembly, part of the 30S ribosomal subunit. Contacts proteins S3 and S10.

Binds 16S rRNA, required for the assembly of 30S particles and may also be responsible for determining the conformation of the 16S rRNA at the A site. This Pseudomonas syringae pv. tomato (strain ATCC BAA-871 / DC3000) protein is Small ribosomal subunit protein uS14.